The sequence spans 112 residues: Protein Churchill (112 aa).

Residues cysteine 2, cysteine 5, cysteine 30, cysteine 33, histidine 59, cysteine 61, cysteine 64, histidine 66, histidine 71, cysteine 88, and cysteine 91 each coordinate Zn(2+).

It belongs to the Churchill family.

Its function is as follows. Transcriptional activator that mediates FGF signaling during neural development. Plays a role in the regulation of cell movement. Does not bind DNA by itself. The polypeptide is Protein Churchill (Churc1) (Mus musculus (Mouse)).